The chain runs to 684 residues: Glycine--tRNA ligase beta subunit (684 aa).

It belongs to the class-II aminoacyl-tRNA synthetase family. In terms of assembly, tetramer of two alpha and two beta subunits.

Its subcellular location is the cytoplasm. The catalysed reaction is tRNA(Gly) + glycine + ATP = glycyl-tRNA(Gly) + AMP + diphosphate. In Pseudomonas aeruginosa (strain LESB58), this protein is Glycine--tRNA ligase beta subunit.